Consider the following 123-residue polypeptide: Fluoride-specific ion channel FluC 2 (123 aa).

A run of 3 helical transmembrane segments spans residues 30–50, 68–88, and 93–113; these read FPLPTLMINVLGALLLGFVAG, VGFIGSFTTFSTWSVDTVLLL, and WPLALANVGISLAVGLAAVWV. Residues G72 and T75 each contribute to the Na(+) site.

This sequence belongs to the fluoride channel Fluc/FEX (TC 1.A.43) family.

The protein localises to the cell membrane. The enzyme catalyses fluoride(in) = fluoride(out). Na(+) is not transported, but it plays an essential structural role and its presence is essential for fluoride channel function. Fluoride-specific ion channel. Important for reducing fluoride concentration in the cell, thus reducing its toxicity. The chain is Fluoride-specific ion channel FluC 2 from Symbiobacterium thermophilum (strain DSM 24528 / JCM 14929 / IAM 14863 / T).